The following is a 148-amino-acid chain: Myosin light chain 3, skeletal muscle isoform (148 aa).

At threonine 1 the chain carries N-acetylthreonine. EF-hand domains lie at 6–41 (DQIE…LGQN) and 82–117 (GTYD…LGEK).

In terms of assembly, myosin is a hexamer of 2 heavy chains and 4 light chains.

The chain is Myosin light chain 3, skeletal muscle isoform from Chelon ramada (Thin-lipped grey mullet).